We begin with the raw amino-acid sequence, 387 residues long: Alanine racemase (387 aa).

Residue Lys38 is the Proton acceptor; specific for D-alanine of the active site. An N6-(pyridoxal phosphate)lysine modification is found at Lys38. Arg136 provides a ligand contact to substrate. Tyr267 (proton acceptor; specific for L-alanine) is an active-site residue. Position 315 (Met315) interacts with substrate.

Belongs to the alanine racemase family. It depends on pyridoxal 5'-phosphate as a cofactor.

The enzyme catalyses L-alanine = D-alanine. It functions in the pathway amino-acid biosynthesis; D-alanine biosynthesis; D-alanine from L-alanine: step 1/1. Catalyzes the interconversion of L-alanine and D-alanine. May also act on other amino acids. This Clostridium novyi (strain NT) protein is Alanine racemase (alr).